The following is a 253-amino-acid chain: 3-deoxy-manno-octulosonate cytidylyltransferase (253 aa).

This sequence belongs to the KdsB family.

Its subcellular location is the cytoplasm. The catalysed reaction is 3-deoxy-alpha-D-manno-oct-2-ulosonate + CTP = CMP-3-deoxy-beta-D-manno-octulosonate + diphosphate. It functions in the pathway nucleotide-sugar biosynthesis; CMP-3-deoxy-D-manno-octulosonate biosynthesis; CMP-3-deoxy-D-manno-octulosonate from 3-deoxy-D-manno-octulosonate and CTP: step 1/1. It participates in bacterial outer membrane biogenesis; lipopolysaccharide biosynthesis. In terms of biological role, activates KDO (a required 8-carbon sugar) for incorporation into bacterial lipopolysaccharide in Gram-negative bacteria. The protein is 3-deoxy-manno-octulosonate cytidylyltransferase of Idiomarina loihiensis (strain ATCC BAA-735 / DSM 15497 / L2-TR).